We begin with the raw amino-acid sequence, 278 residues long: Probable endonuclease 4 (278 aa).

Residues His69, His109, Glu145, Asp179, His182, His214, Asp227, His229, and Glu259 each coordinate Zn(2+).

The protein belongs to the AP endonuclease 2 family. Zn(2+) is required as a cofactor.

It carries out the reaction Endonucleolytic cleavage to 5'-phosphooligonucleotide end-products.. In terms of biological role, endonuclease IV plays a role in DNA repair. It cleaves phosphodiester bonds at apurinic or apyrimidinic (AP) sites, generating a 3'-hydroxyl group and a 5'-terminal sugar phosphate. The polypeptide is Probable endonuclease 4 (Phocaeicola vulgatus (strain ATCC 8482 / DSM 1447 / JCM 5826 / CCUG 4940 / NBRC 14291 / NCTC 11154) (Bacteroides vulgatus)).